The primary structure comprises 201 residues: 3-isopropylmalate dehydratase small subunit (201 aa).

This sequence belongs to the LeuD family. LeuD type 1 subfamily. Heterodimer of LeuC and LeuD.

The catalysed reaction is (2R,3S)-3-isopropylmalate = (2S)-2-isopropylmalate. It functions in the pathway amino-acid biosynthesis; L-leucine biosynthesis; L-leucine from 3-methyl-2-oxobutanoate: step 2/4. Its function is as follows. Catalyzes the isomerization between 2-isopropylmalate and 3-isopropylmalate, via the formation of 2-isopropylmaleate. The polypeptide is 3-isopropylmalate dehydratase small subunit (Dinoroseobacter shibae (strain DSM 16493 / NCIMB 14021 / DFL 12)).